We begin with the raw amino-acid sequence, 100 residues long: Urease subunit gamma (100 aa).

It belongs to the urease gamma subunit family. As to quaternary structure, heterotrimer of UreA (gamma), UreB (beta) and UreC (alpha) subunits. Three heterotrimers associate to form the active enzyme.

It localises to the cytoplasm. The enzyme catalyses urea + 2 H2O + H(+) = hydrogencarbonate + 2 NH4(+). Its pathway is nitrogen metabolism; urea degradation; CO(2) and NH(3) from urea (urease route): step 1/1. The polypeptide is Urease subunit gamma (Sinorhizobium fredii (strain NBRC 101917 / NGR234)).